We begin with the raw amino-acid sequence, 414 residues long: Ribulose bisphosphate carboxylase/oxygenase activase (414 aa).

37–44 (GRKGEGKT) is a binding site for ATP. Residues 296 to 326 (RGYQTAPPPEAPVIQPVNNSSHKQKTSNTHL) are disordered. Positions 311–326 (PVNNSSHKQKTSNTHL) are enriched in polar residues.

Belongs to the RuBisCO activase family.

Its function is as follows. Activation of RuBisCO (ribulose-1,5-bisohosphate carboxylase/oxygenase; EC 4.1.1.39) involves the ATP-dependent carboxylation of the epsilon-amino group of lysine leading to a carbamate structure. This is Ribulose bisphosphate carboxylase/oxygenase activase (rca) from Nostoc sp. (strain PCC 7120 / SAG 25.82 / UTEX 2576).